The sequence spans 370 residues: Probable phosphoserine aminotransferase (370 aa).

L-glutamate is bound at residue Arg-45. Pyridoxal 5'-phosphate contacts are provided by residues Gly-79–Thr-80, Trp-105, Thr-154, Asp-175, and Gln-198. An N6-(pyridoxal phosphate)lysine modification is found at Lys-199. A pyridoxal 5'-phosphate-binding site is contributed by Asn-240–Thr-241.

The protein belongs to the class-V pyridoxal-phosphate-dependent aminotransferase family. SerC subfamily. Homodimer. Requires pyridoxal 5'-phosphate as cofactor.

The catalysed reaction is O-phospho-L-serine + 2-oxoglutarate = 3-phosphooxypyruvate + L-glutamate. It carries out the reaction 4-(phosphooxy)-L-threonine + 2-oxoglutarate = (R)-3-hydroxy-2-oxo-4-phosphooxybutanoate + L-glutamate. It participates in amino-acid biosynthesis; L-serine biosynthesis; L-serine from 3-phospho-D-glycerate: step 2/3. Its pathway is cofactor biosynthesis; pyridoxine 5'-phosphate biosynthesis; pyridoxine 5'-phosphate from D-erythrose 4-phosphate: step 3/5. Catalyzes the reversible conversion of 3-phosphohydroxypyruvate to phosphoserine and of 3-hydroxy-2-oxo-4-phosphonooxybutanoate to phosphohydroxythreonine. This Caenorhabditis elegans protein is Probable phosphoserine aminotransferase.